Reading from the N-terminus, the 412-residue chain is Phosphoglycerate kinase (412 aa).

Residues 26–28 (DFN), Arg-42, 65–68 (HLGR), Arg-133, and Arg-166 each bind substrate. Residues Lys-217, Gly-308, Glu-339, and 368 to 371 (GGDS) contribute to the ATP site.

This sequence belongs to the phosphoglycerate kinase family. As to quaternary structure, monomer.

The protein localises to the cytoplasm. It carries out the reaction (2R)-3-phosphoglycerate + ATP = (2R)-3-phospho-glyceroyl phosphate + ADP. It participates in carbohydrate degradation; glycolysis; pyruvate from D-glyceraldehyde 3-phosphate: step 2/5. The chain is Phosphoglycerate kinase from Synechococcus sp. (strain JA-3-3Ab) (Cyanobacteria bacterium Yellowstone A-Prime).